We begin with the raw amino-acid sequence, 141 residues long: Hemoglobin subunit alpha (141 aa).

The 141-residue stretch at 1-141 (VLSANDKTNV…VSTVLTSKYR (141 aa)) folds into the Globin domain. At S3 the chain carries Phosphoserine. K7 bears the N6-succinyllysine mark. The residue at position 8 (T8) is a Phosphothreonine. Residue K11 is modified to N6-succinyllysine. K16 is subject to N6-acetyllysine; alternate. K16 is subject to N6-succinyllysine; alternate. A Phosphotyrosine modification is found at Y24. A Phosphoserine modification is found at S35. N6-succinyllysine is present on K40. S49 carries the post-translational modification Phosphoserine. Q58 is a binding site for O2. H87 contributes to the heme b binding site. At T108 the chain carries Phosphothreonine. S124 and S131 each carry phosphoserine. 2 positions are modified to phosphothreonine: T134 and T137. S138 is modified (phosphoserine).

Belongs to the globin family. Heterotetramer of two alpha chains and two beta chains. As to expression, red blood cells.

Its function is as follows. Involved in oxygen transport from the lung to the various peripheral tissues. Hemopressin acts as an antagonist peptide of the cannabinoid receptor CNR1. Hemopressin-binding efficiently blocks cannabinoid receptor CNR1 and subsequent signaling. This is Hemoglobin subunit alpha (HBA) from Didelphis virginiana (North American opossum).